Consider the following 393-residue polypeptide: S-adenosylmethionine synthase (393 aa).

E9 lines the Mg(2+) pocket. ATP is bound at residue H15. E43 is a K(+) binding site. E56 and Q99 together coordinate L-methionine. ATP contacts are provided by residues 167 to 169, 235 to 238, D246, 252 to 253, A269, K273, and K277; these read DGK, SGRF, and RK. An L-methionine-binding site is contributed by D246. K277 contributes to the L-methionine binding site.

It belongs to the AdoMet synthase family. In terms of assembly, homotetramer. Mn(2+) is required as a cofactor. Mg(2+) serves as cofactor. The cofactor is Co(2+). Requires K(+) as cofactor.

It is found in the cytoplasm. The catalysed reaction is L-methionine + ATP + H2O = S-adenosyl-L-methionine + phosphate + diphosphate. It functions in the pathway amino-acid biosynthesis; S-adenosyl-L-methionine biosynthesis; S-adenosyl-L-methionine from L-methionine: step 1/1. Catalyzes the formation of S-adenosylmethionine from methionine and ATP. The reaction comprises two steps that are both catalyzed by the same enzyme: formation of S-adenosylmethionine (AdoMet) and triphosphate, and subsequent hydrolysis of the triphosphate. The polypeptide is S-adenosylmethionine synthase (SAMS) (Gossypium hirsutum (Upland cotton)).